Consider the following 40-residue polypeptide: SGSKIGNGCFGLPLDRISNTSGMGCRNPIQNRPKSTPGGS.

A disulfide bond links Cys9 and Cys25. Residues 17–34 are compositionally biased toward polar residues; it reads ISNTSGMGCRNPIQNRPK. Residues 17–40 form a disordered region; sequence ISNTSGMGCRNPIQNRPKSTPGGS.

It belongs to the natriuretic peptide family. Expressed by the venom gland.

It is found in the secreted. Functionally, snake venom natriuretic peptide that targets NPR1 and possibly NPR2. Exhibits hypotensive and vasodepressor activities. Recombinant PtNP-a demonstrates a dose-dependent stimulation of cGMP production via the natriuretic peptide receptor 1 (NPR1) (EC(50)=563 nM) in Madine Darby Canine Kidney (MDCK) cells. It also inhibits the angiotensin converting enzyme (ACE). In Pseudonaja textilis (Eastern brown snake), this protein is Natriuretic peptide PtNP-a.